Here is a 359-residue protein sequence, read N- to C-terminus: Photosystem II protein D1 2 (359 aa).

3 helical membrane passes run 29–46, 118–133, and 142–156; these read YVGW…AATT, HFLI…EWEL, and WICV…AASA. His118 lines the chlorophyll a pocket. Tyr126 provides a ligand contact to pheophytin a. Residues Asp170 and Glu189 each contribute to the [CaMn4O5] cluster site. A helical transmembrane segment spans residues 197-218; sequence FHMLGVAGVFGGSLFSAMHGSL. A chlorophyll a-binding site is contributed by His198. Residues His215 and 264 to 265 contribute to the a quinone site; that span reads SF. His215 serves as a coordination point for Fe cation. Residue His272 coordinates Fe cation. A helical transmembrane segment spans residues 274-288; sequence FLAAWPVVGIWFTAL. Positions 332, 333, 342, and 344 each coordinate [CaMn4O5] cluster. Positions 345–359 are excised as a propeptide; the sequence is AAESTPVALQAPAIG.

It belongs to the reaction center PufL/M/PsbA/D family. In terms of assembly, PSII is composed of 1 copy each of membrane proteins PsbA, PsbB, PsbC, PsbD, PsbE, PsbF, PsbH, PsbI, PsbJ, PsbK, PsbL, PsbM, PsbT, PsbX, PsbY, PsbZ, Psb30/Ycf12, peripheral proteins PsbO, CyanoQ (PsbQ), PsbU, PsbV and a large number of cofactors. It forms dimeric complexes. The D1/D2 heterodimer binds P680, chlorophylls that are the primary electron donor of PSII, and subsequent electron acceptors. It shares a non-heme iron and each subunit binds pheophytin, quinone, additional chlorophylls, carotenoids and lipids. D1 provides most of the ligands for the Mn4-Ca-O5 cluster of the oxygen-evolving complex (OEC). There is also a Cl(-1) ion associated with D1 and D2, which is required for oxygen evolution. The PSII complex binds additional chlorophylls, carotenoids and specific lipids. serves as cofactor. Tyr-161 forms a radical intermediate that is referred to as redox-active TyrZ, YZ or Y-Z. Post-translationally, C-terminally processed by CtpA; processing is essential to allow assembly of the oxygen-evolving complex and thus photosynthetic growth.

It localises to the cellular thylakoid membrane. The catalysed reaction is 2 a plastoquinone + 4 hnu + 2 H2O = 2 a plastoquinol + O2. Photosystem II (PSII) is a light-driven water:plastoquinone oxidoreductase that uses light energy to abstract electrons from H(2)O, generating O(2) and a proton gradient subsequently used for ATP formation. It consists of a core antenna complex that captures photons, and an electron transfer chain that converts photonic excitation into a charge separation. The D1/D2 (PsbA/PsbD) reaction center heterodimer binds P680, the primary electron donor of PSII as well as several subsequent electron acceptors. The chain is Photosystem II protein D1 2 from Synechococcus sp. (strain CC9311).